A 521-amino-acid polypeptide reads, in one-letter code: Protein YjiT (521 aa).

In Escherichia coli (strain K12), this protein is Protein YjiT (yjiT).